The primary structure comprises 130 residues: MYKAETRGIMVTVEPRFVEEESSPGESRYFFAYTVEIVNNGSEQVQLRSRHWRIIDGRGACQEVRGAGVVGKQPVLEPGESFSYTSGCPLTTPDGLMAGSYTMSTIGGESFEAEIPAFSLDSPHLRRVVH.

One can recognise an ApaG domain in the interval 3-127 (KAETRGIMVT…FSLDSPHLRR (125 aa)).

The chain is Protein ApaG from Methylorubrum extorquens (strain CM4 / NCIMB 13688) (Methylobacterium extorquens).